Consider the following 518-residue polypeptide: Glucan 1,4-alpha-maltohexaosidase (518 aa).

The N-terminal stretch at Met1 to Ala33 is a signal peptide. Residues Asn139, Asp196, Ala219, Asp221, Asp232, Asp238, Asp240, and Asp242 each contribute to the Ca(2+) site. Asp196 is a Na(+) binding site. Asp221, Asp232, and Asp238 together coordinate Na(+). The active-site Nucleophile is Asp269. His273 lines the Ca(2+) pocket. Glu299 serves as the catalytic Proton donor.

It belongs to the glycosyl hydrolase 13 family. Requires Ca(2+) as cofactor. The cofactor is Na(+).

The protein localises to the secreted. The catalysed reaction is Hydrolysis of (1-&gt;4)-alpha-D-glucosidic linkages in amylaceous polysaccharides, to remove successive maltohexaose residues from the non-reducing chain ends.. The protein operates within glycan degradation; starch degradation. The sequence is that of Glucan 1,4-alpha-maltohexaosidase from Bacillus sp. (strain 707).